The sequence spans 297 residues: Cytosolic Fe-S cluster assembly factor CFD1 (297 aa).

Residue 15-22 coordinates ATP; it reads GKGGVGKS. 2 residues coordinate [4Fe-4S] cluster: cysteine 216 and cysteine 219.

The protein belongs to the Mrp/NBP35 ATP-binding proteins family. NUBP2/CFD1 subfamily. As to quaternary structure, heterotetramer of 2 NBP35 and 2 CFD1 chains. [4Fe-4S] cluster serves as cofactor.

The protein resides in the cytoplasm. Functionally, component of the cytosolic iron-sulfur (Fe/S) protein assembly (CIA) machinery. Required for maturation of extramitochondrial Fe-S proteins. The NBP35-CFD1 heterotetramer forms a Fe-S scaffold complex, mediating the de novo assembly of an Fe-S cluster and its transfer to target apoproteins. The sequence is that of Cytosolic Fe-S cluster assembly factor CFD1 from Phaeosphaeria nodorum (strain SN15 / ATCC MYA-4574 / FGSC 10173) (Glume blotch fungus).